Reading from the N-terminus, the 91-residue chain is Non-structural protein 3a (91 aa).

Residues 1–19 form the signal peptide; that stretch reads MVSFNATAILLLLLANAFS.

The chain is Non-structural protein 3a from Tylonycteris pachypus (Lesser bamboo bat).